The primary structure comprises 710 residues: DNA ligase (710 aa).

A disordered region spans residues Met1–Thr36. Residues Asp63 to Asp67, Ser111 to Ile112, and Glu147 each bind NAD(+). Residue Lys149 is the N6-AMP-lysine intermediate of the active site. NAD(+)-binding residues include Arg170, Glu206, and Lys353. Zn(2+) contacts are provided by Cys444, Cys447, Cys460, and Cys466. One can recognise a BRCT domain in the interval Glu623 to Glu710. Residues Ala657–Val689 are disordered.

The protein belongs to the NAD-dependent DNA ligase family. LigA subfamily. Mg(2+) serves as cofactor. It depends on Mn(2+) as a cofactor.

The enzyme catalyses NAD(+) + (deoxyribonucleotide)n-3'-hydroxyl + 5'-phospho-(deoxyribonucleotide)m = (deoxyribonucleotide)n+m + AMP + beta-nicotinamide D-nucleotide.. Functionally, DNA ligase that catalyzes the formation of phosphodiester linkages between 5'-phosphoryl and 3'-hydroxyl groups in double-stranded DNA using NAD as a coenzyme and as the energy source for the reaction. It is essential for DNA replication and repair of damaged DNA. The protein is DNA ligase of Halorubrum lacusprofundi (strain ATCC 49239 / DSM 5036 / JCM 8891 / ACAM 34).